Consider the following 318-residue polypeptide: Oncosphere antigen A (318 aa).

Fibronectin type-III domains are found at residues 6–103 (IPQN…TPLP), 109–207 (KPSF…ISRA), and 211–308 (VPQN…TPSV).

This is Oncosphere antigen A (ONCA) from Hydatigena taeniaeformis (Feline tapeworm).